Reading from the N-terminus, the 323-residue chain is Prenyl transferase (323 aa).

3 residues coordinate isopentenyl diphosphate: Lys-46, Arg-49, and His-81. Asp-88 and Asp-92 together coordinate Mg(2+). Residue Arg-97 coordinates an all-trans-polyprenyl diphosphate. Residue Arg-98 participates in isopentenyl diphosphate binding. Residues Lys-174, Thr-175, and Gln-212 each contribute to the an all-trans-polyprenyl diphosphate site.

Belongs to the FPP/GGPP synthase family. Requires Mg(2+) as cofactor.

Its subcellular location is the plastid. It is found in the chloroplast. In terms of biological role, possible role in synthesis of the nonaprenyl side chain of plastoquinone or in synthesis of other prenyl chains such as undekaprenyl pyrophosphate. This is Prenyl transferase (preA) from Cyanidium caldarium (Red alga).